The primary structure comprises 484 residues: uncharacterized protein (484 aa).

The next 12 membrane-spanning stretches (helical) occupy residues 19–39 (LSFG…MIFV), 78–98 (VNWG…WLIV), 111–131 (FFML…FIIL), 134–154 (IFAI…SNYL), 165–185 (FSPF…AGII), 199–219 (IVFL…IILG), 249–269 (TWYW…PFTF), 289–309 (ISVF…TIGL), 321–341 (ISTI…VFVL), 360–380 (LFLF…GVML), 398–418 (FGLI…ITSL), and 440–460 (LGAY…LALL).

It localises to the cell membrane. This is an uncharacterized protein from Mesomycoplasma hyopneumoniae (strain 232) (Mycoplasma hyopneumoniae).